The primary structure comprises 249 residues: Proteasome subunit alpha type-7-1A (249 aa).

The protein belongs to the peptidase T1A family. As to quaternary structure, the 26S proteasome consists of a 20S proteasome core and two 19S regulatory subunits. The 20S proteasome core is composed of 28 subunits that are arranged in four stacked rings, resulting in a barrel-shaped structure. The two end rings are each formed by seven alpha subunits, and the two central rings are each formed by seven beta subunits. The catalytic chamber with the active sites is on the inside of the barrel. Testis specific.

It localises to the cytoplasm. It is found in the nucleus. Functionally, the proteasome is a multicatalytic proteinase complex which is characterized by its ability to cleave peptides with Arg, Phe, Tyr, Leu, and Glu adjacent to the leaving group at neutral or slightly basic pH. The proteasome has an ATP-dependent proteolytic activity. The chain is Proteasome subunit alpha type-7-1A (Prosalpha4T1) from Drosophila melanogaster (Fruit fly).